The sequence spans 403 residues: Phospholipase A1-II 2 (403 aa).

Serine 218 (acyl-ester intermediate) is an active-site residue. Catalysis depends on charge relay system residues serine 218, aspartate 286, and histidine 323. The interval 381 to 403 (GPDGRWVLQDHEPDDDDDDDDDD) is disordered. The span at 392–403 (EPDDDDDDDDDD) shows a compositional bias: acidic residues.

This sequence belongs to the AB hydrolase superfamily. Lipase family.

The protein resides in the cytoplasm. Functionally, acylhydrolase that catalyzes the hydrolysis of phospholipids at the sn-1 position. The chain is Phospholipase A1-II 2 from Oryza sativa subsp. indica (Rice).